Reading from the N-terminus, the 777-residue chain is Ethylene receptor 4 (777 aa).

Helical transmembrane passes span 49-69, 77-97, and 113-133; these read LLIA…ATCA, AVLH…LAAF, and AAKV…LTFI. Residues Cys-88 and His-92 each coordinate Cu cation. In terms of domain architecture, GAF spans 184 to 344; sequence DAHAILRTTA…VVADQAAVAL (161 aa). Residues 387–521 form the Histidine kinase domain; sequence AMCHAMRRPV…NTGSGACRLS (135 aa). Phosphohistidine; by autocatalysis is present on His-390. Residues 645–774 enclose the Response regulatory domain; the sequence is RVLLADDDAM…ALGAQLCRVL (130 aa). 4-aspartylphosphate is present on Asp-696.

Belongs to the ethylene receptor family. The cofactor is Cu cation.

It is found in the endoplasmic reticulum membrane. It carries out the reaction ATP + protein L-histidine = ADP + protein N-phospho-L-histidine.. Ethylene receptor related to bacterial two-component regulators. Acts as a redundant negative regulator of ethylene signaling. The sequence is that of Ethylene receptor 4 (ETR4) from Oryza sativa subsp. japonica (Rice).